The sequence spans 366 residues: MLKRIVQAFFIIFGGVVGIFLIPELFVLLNIQDIPLITNAYTSAAIGAIIFFLISIWGTEYVVNWVKWIEDSLLKAPVPDLLFGSLGLVFGLIIAYLIVNVIPLDNIPYRIFSTIIPVFLAFFLGYLGFQVGFKKKDELISLFSISARMQKKKGTADEEHEVQDKKLKILDTSVIIDGRIADICQTGFLEGVIVIPQFVLEELQHIADSSDVLKRNRGRRGLDILNRIQKELDIEVEIYEGDFEDIQEVDSKLVKLAKLTSGVVVTNDFNLNKVCELQKVAVLNINDLANAVKPVVLPGEEMNVQVIKDGKEHNQGVAYLDDGTMIVVEEGRNYIGKHIDVLVTSVLQTAAGRMIFAKPKLLEKAL.

One can recognise a PINc domain in the interval Ile169 to Val280. Asp250 lines the Mg(2+) pocket. The region spanning Val295–Phe356 is the TRAM domain.

The protein belongs to the ycf81 family. In the central section; belongs to the PINc/VapC protein family. It depends on Mg(2+) as a cofactor.

An RNase. This is an uncharacterized protein from Bacillus subtilis (strain 168).